Reading from the N-terminus, the 201-residue chain is Retinol-binding protein 4 (201 aa).

The N-terminal stretch at methionine 1–alanine 18 is a signal peptide. 3 disulfides stabilise this stretch: cysteine 22/cysteine 178, cysteine 88/cysteine 192, and cysteine 138/cysteine 147. Glutamine 116 is a binding site for substrate. At arginine 139 the chain carries Omega-N-methylarginine.

It belongs to the calycin superfamily. Lipocalin family. In terms of assembly, interacts with TTR. Interaction with TTR prevents its loss by filtration through the kidney glomeruli. Interacts with STRA6.

It is found in the secreted. Functionally, retinol-binding protein that mediates retinol transport in blood plasma. Delivers retinol from the liver stores to the peripheral tissues. Transfers the bound all-trans retinol to STRA6, that then facilitates retinol transport across the cell membrane. The polypeptide is Retinol-binding protein 4 (RBP4) (Equus caballus (Horse)).